Consider the following 856-residue polypeptide: Rod cGMP-specific 3',5'-cyclic phosphodiesterase subunit beta (856 aa).

Position 2 is an N-acetylserine (Ser-2). 2 GAF domains span residues 71–220 and 252–429; these read NMER…TLNL and DIER…GWSV. Residues 481 to 814 form the PDEase domain; it reads EEDELGKILK…KEWKALADEY (334 aa). The Proton donor role is filled by His-557. Positions 561, 597, 598, and 718 each coordinate a divalent metal cation. A lipid anchor (S-geranylgeranyl cysteine) is attached at Cys-853. The propeptide at 854–856 is removed in mature form; that stretch reads CIL.

It belongs to the cyclic nucleotide phosphodiesterase family. Oligomer composed of two catalytic chains (alpha and beta), an inhibitory chain (gamma) and the delta chain. The cofactor is a divalent metal cation.

It is found in the membrane. Its subcellular location is the cell projection. The protein resides in the cilium. The protein localises to the photoreceptor outer segment. It catalyses the reaction 3',5'-cyclic GMP + H2O = GMP + H(+). Functionally, rod-specific cGMP phosphodiesterase that catalyzes the hydrolysis of 3',5'-cyclic GMP. Necessary for the formation of a functional phosphodiesterase holoenzyme. Involved in retinal circadian rhythm photoentrainment via modulation of UVA and orange light-induced phase-shift of the retina clock. May participate in processes of transmission and amplification of the visual signal. The protein is Rod cGMP-specific 3',5'-cyclic phosphodiesterase subunit beta of Mus musculus (Mouse).